The primary structure comprises 177 residues: Large ribosomal subunit protein uL6 (177 aa).

It belongs to the universal ribosomal protein uL6 family. As to quaternary structure, part of the 50S ribosomal subunit.

Functionally, this protein binds to the 23S rRNA, and is important in its secondary structure. It is located near the subunit interface in the base of the L7/L12 stalk, and near the tRNA binding site of the peptidyltransferase center. The polypeptide is Large ribosomal subunit protein uL6 (Klebsiella pneumoniae subsp. pneumoniae (strain ATCC 700721 / MGH 78578)).